Reading from the N-terminus, the 210-residue chain is Cytidylate kinase (210 aa).

9-17 (GPAAAGKGT) serves as a coordination point for ATP.

This sequence belongs to the cytidylate kinase family. Type 1 subfamily.

It is found in the cytoplasm. The enzyme catalyses CMP + ATP = CDP + ADP. It carries out the reaction dCMP + ATP = dCDP + ADP. The sequence is that of Cytidylate kinase from Agrobacterium fabrum (strain C58 / ATCC 33970) (Agrobacterium tumefaciens (strain C58)).